A 663-amino-acid chain; its full sequence is Translation factor GUF1, mitochondrial (663 aa).

Residues 1–37 (MRGCLQSVRLLTTALGQSPRRPLPFAFRLPPNASRLF) constitute a mitochondrion transit peptide. Residues 65-245 (ERYRNFCIVA…TIVEQIPAPI (181 aa)) enclose the tr-type G domain. Residues 74–81 (AHVDHGKS), 138–142 (DTPGH), and 192–195 (NKVD) contribute to the GTP site.

It belongs to the TRAFAC class translation factor GTPase superfamily. Classic translation factor GTPase family. LepA subfamily.

The protein resides in the mitochondrion inner membrane. It catalyses the reaction GTP + H2O = GDP + phosphate + H(+). In terms of biological role, promotes mitochondrial protein synthesis. May act as a fidelity factor of the translation reaction, by catalyzing a one-codon backward translocation of tRNAs on improperly translocated ribosomes. Binds to mitochondrial ribosomes in a GTP-dependent manner. The sequence is that of Translation factor GUF1, mitochondrial from Uncinocarpus reesii (strain UAMH 1704).